The chain runs to 179 residues: ATP-dependent protease subunit HslV (179 aa).

Thr7 is an active-site residue. Residues Gly162, Cys165, and Thr168 each coordinate Na(+).

It belongs to the peptidase T1B family. HslV subfamily. In terms of assembly, a double ring-shaped homohexamer of HslV is capped on each side by a ring-shaped HslU homohexamer. The assembly of the HslU/HslV complex is dependent on binding of ATP.

The protein resides in the cytoplasm. The enzyme catalyses ATP-dependent cleavage of peptide bonds with broad specificity.. Allosterically activated by HslU binding. Functionally, protease subunit of a proteasome-like degradation complex believed to be a general protein degrading machinery. The protein is ATP-dependent protease subunit HslV of Teredinibacter turnerae (strain ATCC 39867 / T7901).